The following is a 31-amino-acid chain: Mycofactocin precursor peptide (31 aa).

The protein belongs to the mycofactocin precursor peptide family. The post-translational modifications that lead to mycofactocin involve oxidative decarboxylation of the C-terminal tyrosine residue catalyzed by MftC, introduction of a tyramine-valine cross-link, removal of the modified C-terminal dipeptide by MftE. The released dipeptide then undergoes oxidative deamination by MftD, glycosylation by MftF and methylation by an unknown enzyme.

In terms of biological role, precursor peptide that leads to mycofactocin (MFT) after extensive post-translational modifications by enzymes encoded by adjacent genes. Mycofactocin acts as a redox cofactor of nicotinamide-dependent oxidoreductases encoded in the same locus. Is required for the in vivo ethanol assimilation in M.smegmatis. In Mycolicibacterium smegmatis (strain ATCC 700084 / mc(2)155) (Mycobacterium smegmatis), this protein is Mycofactocin precursor peptide.